The sequence spans 1138 residues: Ras guanine nucleotide exchange factor N (1138 aa).

3 LRR repeats span residues Met1–Leu16, His18–Gly39, and Thr43–Leu64. Disordered regions lie at residues Ala126–Asn180, Phe239–Lys301, Asn319–Asn360, Ile389–Gln411, Gly473–Asn540, Ala601–Ser643, and Met660–Gly680. Residues Lys140 to Thr158 show a composition bias toward low complexity. A compositionally biased stretch (polar residues) spans Arg263 to Ile275. A compositionally biased stretch (gly residues) spans Ser283–Ser299. Positions Gly326–Ile352 are enriched in low complexity. Residues Arg393–Ile405 are compositionally biased toward basic and acidic residues. The segment covering Pro487–Ile496 has biased composition (pro residues). Over residues Asp498–Ile511 the composition is skewed to polar residues. Low complexity-rich tracts occupy residues Asn512 to Asn540 and Asn605 to Gln634. An N-terminal Ras-GEF domain is found at Gly733–Arg855. One can recognise a Ras-GEF domain in the interval Arg891 to Lys1118.

Promotes the exchange of Ras-bound GDP by GTP. May play a role in chemotaxis. The protein is Ras guanine nucleotide exchange factor N (gefN) of Dictyostelium discoideum (Social amoeba).